Reading from the N-terminus, the 672-residue chain is Threonine--tRNA ligase (672 aa).

Residues 1-64 (MTELLKISLP…EGDAELALIT (64 aa)) enclose the TGS domain. The tract at residues 257-566 (DHRKLGREMD…LIEHFAGRLP (310 aa)) is catalytic. Zn(2+)-binding residues include Cys362, His413, and His543.

This sequence belongs to the class-II aminoacyl-tRNA synthetase family. As to quaternary structure, homodimer. Zn(2+) serves as cofactor.

It localises to the cytoplasm. The enzyme catalyses tRNA(Thr) + L-threonine + ATP = L-threonyl-tRNA(Thr) + AMP + diphosphate + H(+). Functionally, catalyzes the attachment of threonine to tRNA(Thr) in a two-step reaction: L-threonine is first activated by ATP to form Thr-AMP and then transferred to the acceptor end of tRNA(Thr). Also edits incorrectly charged L-seryl-tRNA(Thr). This Erythrobacter litoralis (strain HTCC2594) protein is Threonine--tRNA ligase.